The following is a 199-amino-acid chain: Recombination protein RecR (199 aa).

The C4-type zinc-finger motif lies at 57 to 72 (CQSCRTYTEETLCPIC). Residues 81 to 176 (STICVVETPA…MISRIAHGVP (96 aa)) enclose the Toprim domain.

The protein belongs to the RecR family.

May play a role in DNA repair. It seems to be involved in an RecBC-independent recombinational process of DNA repair. It may act with RecF and RecO. The protein is Recombination protein RecR of Shewanella baltica (strain OS155 / ATCC BAA-1091).